The primary structure comprises 191 residues: Retinin (191 aa).

Residues 1–21 (MSRLFLPVLAIVLVSIGASHT) form the signal peptide. The interval 52 to 88 (LADGSSGSVSSSAAQPEDQSQEEAEEQQVSSASSGSA) is disordered. 2 stretches are compositionally biased toward low complexity: residues 55–69 (GSSG…QPED) and 78–88 (QQVSSASSGSA).

In terms of processing, phosphorylated. In terms of tissue distribution, specifically expressed in cornea (at protein level). Detected in retina and cortex.

It localises to the secreted. The polypeptide is Retinin (Drosophila melanogaster (Fruit fly)).